The following is a 157-amino-acid chain: Crossover junction endodeoxyribonuclease RuvC (157 aa).

Active-site residues include aspartate 7, glutamate 70, and aspartate 142. Aspartate 7, glutamate 70, and aspartate 142 together coordinate Mg(2+).

It belongs to the RuvC family. In terms of assembly, homodimer which binds Holliday junction (HJ) DNA. The HJ becomes 2-fold symmetrical on binding to RuvC with unstacked arms; it has a different conformation from HJ DNA in complex with RuvA. In the full resolvosome a probable DNA-RuvA(4)-RuvB(12)-RuvC(2) complex forms which resolves the HJ. Mg(2+) is required as a cofactor.

Its subcellular location is the cytoplasm. The catalysed reaction is Endonucleolytic cleavage at a junction such as a reciprocal single-stranded crossover between two homologous DNA duplexes (Holliday junction).. Functionally, the RuvA-RuvB-RuvC complex processes Holliday junction (HJ) DNA during genetic recombination and DNA repair. Endonuclease that resolves HJ intermediates. Cleaves cruciform DNA by making single-stranded nicks across the HJ at symmetrical positions within the homologous arms, yielding a 5'-phosphate and a 3'-hydroxyl group; requires a central core of homology in the junction. The consensus cleavage sequence is 5'-(A/T)TT(C/G)-3'. Cleavage occurs on the 3'-side of the TT dinucleotide at the point of strand exchange. HJ branch migration catalyzed by RuvA-RuvB allows RuvC to scan DNA until it finds its consensus sequence, where it cleaves and resolves the cruciform DNA. This chain is Crossover junction endodeoxyribonuclease RuvC, found in Synechococcus sp. (strain RCC307).